We begin with the raw amino-acid sequence, 191 residues long: A-type ATP synthase subunit E (191 aa).

The protein belongs to the V-ATPase E subunit family. As to quaternary structure, has multiple subunits with at least A(3), B(3), C, D, E, F, H, I and proteolipid K(x). The N-terminus is blocked.

The protein resides in the cell membrane. Component of the A-type ATP synthase that produces ATP from ADP in the presence of a proton gradient across the membrane. The sequence is that of A-type ATP synthase subunit E from Sulfurisphaera tokodaii (strain DSM 16993 / JCM 10545 / NBRC 100140 / 7) (Sulfolobus tokodaii).